The primary structure comprises 236 residues: Probable transcriptional regulatory protein FP0835 (236 aa).

This sequence belongs to the TACO1 family.

The protein resides in the cytoplasm. The sequence is that of Probable transcriptional regulatory protein FP0835 from Flavobacterium psychrophilum (strain ATCC 49511 / DSM 21280 / CIP 103535 / JIP02/86).